Here is a 1545-residue protein sequence, read N- to C-terminus: Dual oxidase 2 (1545 aa).

Positions 1 to 25 (MLCIRPEALVLLGALLTVPLDPVGG) are cleaved as a signal peptide. Residues 26-601 (QDALSLTWEV…EGSGPGFGIT (576 aa)) are Extracellular-facing. The tract at residues 30 to 596 (SLTWEVQRYD…VIQYFEGSGP (567 aa)) is peroxidase-like; mediates peroxidase activity. Residues asparagine 100, asparagine 312, asparagine 348, asparagine 358, asparagine 455, and asparagine 549 are each glycosylated (N-linked (GlcNAc...) asparagine). Cysteine 124 and cysteine 1159 form a disulfide bridge. A helical membrane pass occupies residues 602-622 (IVALCCLPLMSLLISGVVAYF). The Cytoplasmic segment spans residues 623–1037 (RSRERKKLQK…YKRFVENYRR (415 aa)). 3 consecutive EF-hand domains span residues 819 to 854 (PQDM…FMKG), 855 to 890 (SPED…FIEI), and 899 to 934 (QLTE…HDSE). Aspartate 832, aspartate 834, asparagine 836, tyrosine 838, glutamate 843, aspartate 868, aspartate 870, asparagine 872, and glutamate 879 together coordinate Ca(2+). An interaction with TXNDC11 region spans residues 960–1242 (RVSFIIRTPE…GSFALIQLPR (283 aa)). Residues 1038-1058 (HIVCVAIFSAICAGLFVERAY) traverse the membrane as a helical segment. The Extracellular segment spans residues 1059 to 1074 (YYAFVSPPSGIAETTF). A helical transmembrane segment spans residues 1075–1097 (VGIILSRGTAASVSFMFSYILLT). The 183-residue stretch at 1081–1263 (RGTAASVSFM…YVGDKLVSLS (183 aa)) folds into the Ferric oxidoreductase domain. Over 1098–1125 (MCRNLITFLRETFLNHYVPFDAAVDFHR) the chain is Cytoplasmic. The helical transmembrane segment at 1126 to 1148 (WIAMAALVLAILHSVGHVVNVYI) threads the bilayer. At 1149-1182 (FSVSPLSLLACVFPSVFVNDGSKLPQKFYWWFFQ) the chain is on the extracellular side. Residues 1183–1203 (TIPGMTGVLLLVVLAIMYVFA) form a helical membrane-spanning segment. Topologically, residues 1204 to 1220 (SPYFRRRSFRGFWLTHH) are cytoplasmic. The helical transmembrane segment at 1221–1241 (FYILLYVLLIIHGSFALIQLP) threads the bilayer. Residue arginine 1242 is a topological domain, extracellular. Residues 1243–1263 (FHIFFLVPALIYVGDKLVSLS) form a helical membrane-spanning segment. The region spanning 1264 to 1370 (RKKVEISVVK…DGPFGEGHQE (107 aa)) is the FAD-binding FR-type domain. Topologically, residues 1264–1545 (RKKVEISVVK…THFVHHYENF (282 aa)) are cytoplasmic.

It in the N-terminal section; belongs to the peroxidase family. As to quaternary structure, heterodimer with DUOXA2; disulfide-linked. Interacts with TXNDC11, TPO and CYBA. In terms of processing, N-glycosylated. As to expression, expressed in thyroid, and the digestive tract especially in stomach, cecum and sigmoidal colon (at protein level). Expressed in thyroid.

The protein localises to the apical cell membrane. It is found in the cell junction. It catalyses the reaction NADH + O2 + H(+) = H2O2 + NAD(+). It carries out the reaction NADPH + O2 + H(+) = H2O2 + NADP(+). The protein operates within hormone biosynthesis; thyroid hormone biosynthesis. The NADPH oxidase activity is calcium-dependent. Peroxidase activity is inhibited by aminobenzohydrazide. Functionally, generates hydrogen peroxide which is required for the activity of thyroid peroxidase/TPO and lactoperoxidase/LPO. Plays a role in thyroid hormones synthesis and lactoperoxidase-mediated antimicrobial defense at the surface of mucosa. May have its own peroxidase activity through its N-terminal peroxidase-like domain. The chain is Dual oxidase 2 (DUOX2) from Sus scrofa (Pig).